The primary structure comprises 792 residues: MKSNLAVFFITCFFCCVFVTSDSVYTLPFPFPRDQVEILLELKNEFPSFNCDLTWKLDYFGRMDTRANISSWTKDSDSFSGVSFDSETGVVKELSLGRQCLTSLKANSSLFRFQHLRYLDLSENHFDSSPIPSGFGRLTYLESLDLSKNGFIGEVPSSISNLSRLTNLDLSYNKLTGGIPNLHSLTLLENIDLSYNKFSGAIPSYLFTMPFLVSLNLRQNHLSDPLENINYSATSKLLILDMAYNLMSHRILEPISKLANLIQIDLSFQKTPYTFNFDFLLFKSLVRLDLSGNSVSVVGTGSENLTHLDLSSCNITEFPMFIKDLQRLWWLDISNNRIKGKVPELLWTLPSMLHVNLSRNSFDSLEGTPKIILNSSISELDLSSNAFKGSFPIIPPYVNIMAASNNYFTGGIPLIFCKRYRLSLLDLSNNNFSGTIPRCLTNVSLGLEALKLSNNSLTGRLPDIEDRLVLLDVGHNQISGKLPRSLVNCTTLKFLNVEGNHINDTFPFWLKALTRLEIIVLRSNRFHGPISSPEVSLSFTALRIIDISRNSFNGSLPQNYFANWSAPLVNTPQGYRWPEYTGDEHSKYETPLWSYPSIHLRIKGRSIELGKIPDTYTSIDFSGNSFEGQIPESIGDLKSLIVLDLSNNSFTGRIPSSLAKLKQLESLDLSQNRISGNIPQELRELTFLGYVNMSHNRLTGQIPQSTQVGGQPKSSFEGNINLCGLPLQESCLRGNGVPSTPHTQEQELPKQEHALNWKAAAIGYGPGVLFGLAIGQAFARYKPVLFYKLFRL.

An N-terminal signal peptide occupies residues M1–S21. Topologically, residues D22–K758 are extracellular. N68 and N107 each carry an N-linked (GlcNAc...) asparagine glycan. 12 LRR repeats span residues Q114–R137, T139–L162, S163–L187, E189–M209, F211–A233, S235–L258, A259–F282, K283–S302, E303–D324, L325–L349, S351–N374, and S375–N399. N161 is a glycosylation site (N-linked (GlcNAc...) asparagine). N230 is a glycosylation site (N-linked (GlcNAc...) asparagine). 2 N-linked (GlcNAc...) asparagine glycosylation sites follow: N304 and N314. N-linked (GlcNAc...) asparagine glycans are attached at residues N356 and N374. An LRR 13; degenerate repeat occupies I400–K418. LRR repeat units follow at residues R419–V443, S444–L470, D472–C489, and T490–R515. N-linked (GlcNAc...) asparagine glycosylation is found at N431, N442, N454, N488, and N503. The LRR 18; degenerate repeat unit spans residues L516–S536. 5 LRR repeats span residues F539–N563, D614–L637, K638–L661, K662–L685, and F687–G709. 2 N-linked (GlcNAc...) asparagine glycosylation sites follow: N553 and N563. N647 carries N-linked (GlcNAc...) asparagine glycosylation. N-linked (GlcNAc...) asparagine glycosylation is present at N692. A helical membrane pass occupies residues A759–A779. The Cytoplasmic segment spans residues R780–L792.

The protein belongs to the RLP family.

The protein resides in the cell membrane. The polypeptide is Receptor-like protein 54 (Arabidopsis thaliana (Mouse-ear cress)).